Consider the following 562-residue polypeptide: Nucleoprotein (562 aa).

The tract at residues 53–238 (MRRDKRDESD…ITQEESQINI (186 aa)) is binding site for the cap structure m7GTP. Mn(2+)-binding residues include D381 and E383. The Zn(2+) site is built by E391, C498, H501, and C522. Residue D526 participates in Mn(2+) binding.

Belongs to the arenaviridae nucleocapsid protein family. As to quaternary structure, homomultimerizes to form the nucleocapsid. Binds to viral genomic RNA. Interacts with glycoprotein G2. Interacts with protein Z; this interaction probably directs the encapsidated genome to budding sites. Interacts with protein L; this interaction does not interfere with Z-L interaction. Interacts with host IKBKE (via Protein kinase domain); the interaction inhibits IKBKE kinase activity.

The protein resides in the virion. It is found in the host cytoplasm. Its function is as follows. Encapsidates the genome, protecting it from nucleases. The encapsidated genomic RNA is termed the nucleocapsid (NC). Serves as template for viral transcription and replication. The increased presence of protein N in host cell does not seem to trigger the switch from transcription to replication as observed in other negative strain RNA viruses. Through the interaction with host IKBKE, strongly inhibits the phosphorylation and nuclear translocation of host IRF3, a protein involved in interferon activation pathway, leading to the inhibition of interferon-beta and IRF3-dependent promoters activation. Also encodes a functional 3'-5' exoribonuclease that degrades preferentially dsRNA substrates and thereby participates in the suppression of interferon induction. In Bear Canyon mammarenavirus (isolate Mouse/United States/AV A0070039/2000) (BCNV), this protein is Nucleoprotein.